The chain runs to 491 residues: Cobyric acid synthase (491 aa).

The GATase cobBQ-type domain maps to 250–439; sequence EVTIAVIRLP…LHGIFDNGAW (190 aa). Residue cysteine 331 is the Nucleophile of the active site. Histidine 431 is a catalytic residue.

The protein belongs to the CobB/CobQ family. CobQ subfamily.

It participates in cofactor biosynthesis; adenosylcobalamin biosynthesis. Catalyzes amidations at positions B, D, E, and G on adenosylcobyrinic A,C-diamide. NH(2) groups are provided by glutamine, and one molecule of ATP is hydrogenolyzed for each amidation. The chain is Cobyric acid synthase from Synechococcus elongatus (strain ATCC 33912 / PCC 7942 / FACHB-805) (Anacystis nidulans R2).